The chain runs to 200 residues: Endochitinase (200 aa).

Residue E58 is the Proton donor of the active site.

It belongs to the glycosyl hydrolase 19 family. Chitinase class I subfamily.

The enzyme catalyses Random endo-hydrolysis of N-acetyl-beta-D-glucosaminide (1-&gt;4)-beta-linkages in chitin and chitodextrins.. This protein functions as a defense against chitin-containing fungal pathogens. This Avena sativa (Oat) protein is Endochitinase.